The primary structure comprises 92 residues: Elongation factor 1-beta (92 aa).

Belongs to the EF-1-beta/EF-1-delta family.

In terms of biological role, promotes the exchange of GDP for GTP in EF-1-alpha/GDP, thus allowing the regeneration of EF-1-alpha/GTP that could then be used to form the ternary complex EF-1-alpha/GTP/AAtRNA. The polypeptide is Elongation factor 1-beta (Korarchaeum cryptofilum (strain OPF8)).